We begin with the raw amino-acid sequence, 302 residues long: Gamma-gliadin (302 aa).

The signal sequence occupies residues 1–19; it reads MKTLLILTILAMATTIATA. Residues 27 to 159 are disordered; sequence GQVQWPQQQP…QSFPQQQQPA (133 aa). Residues 42–102 show a composition bias toward low complexity; the sequence is QPFCQQPQRT…PQPQQTFPQQ (61 aa). Residues 103–124 are compositionally biased toward pro residues; the sequence is PQLPFPQQPQQPFPQPQQPQQP. A compositionally biased stretch (low complexity) spans 125–159; that stretch reads FPQSQQPQQPFPQPQQQFPQPQQPQQSFPQQQQPA.

Belongs to the gliadin/glutenin family.

In terms of biological role, gliadin is the major seed storage protein in wheat. The sequence is that of Gamma-gliadin from Triticum aestivum (Wheat).